A 445-amino-acid chain; its full sequence is Arginine biosynthesis bifunctional protein ArgJ, mitochondrial (445 aa).

Positions 189, 215, 226, 312, 440, and 445 each coordinate substrate. Thr-226 functions as the Nucleophile in the catalytic mechanism.

It belongs to the ArgJ family. As to quaternary structure, heterodimer of an alpha and a beta chain. In terms of processing, the alpha and beta chains are autoproteolytically processed from a single precursor protein within the mitochondrion.

Its subcellular location is the mitochondrion matrix. The enzyme catalyses N(2)-acetyl-L-ornithine + L-glutamate = N-acetyl-L-glutamate + L-ornithine. The catalysed reaction is L-glutamate + acetyl-CoA = N-acetyl-L-glutamate + CoA + H(+). It functions in the pathway amino-acid biosynthesis; L-arginine biosynthesis; L-ornithine and N-acetyl-L-glutamate from L-glutamate and N(2)-acetyl-L-ornithine (cyclic): step 1/1. Its pathway is amino-acid biosynthesis; L-arginine biosynthesis; N(2)-acetyl-L-ornithine from L-glutamate: step 1/4. Catalyzes two activities which are involved in the cyclic version of arginine biosynthesis: the synthesis of acetylglutamate from glutamate and acetyl-CoA, and of ornithine by transacetylation between acetylornithine and glutamate. The polypeptide is Arginine biosynthesis bifunctional protein ArgJ, mitochondrial (Schizosaccharomyces pombe (strain 972 / ATCC 24843) (Fission yeast)).